The primary structure comprises 312 residues: Methionyl-tRNA formyltransferase (312 aa).

Residue 109 to 112 coordinates (6S)-5,6,7,8-tetrahydrofolate; the sequence is SLLP.

The protein belongs to the Fmt family.

The enzyme catalyses L-methionyl-tRNA(fMet) + (6R)-10-formyltetrahydrofolate = N-formyl-L-methionyl-tRNA(fMet) + (6S)-5,6,7,8-tetrahydrofolate + H(+). Attaches a formyl group to the free amino group of methionyl-tRNA(fMet). The formyl group appears to play a dual role in the initiator identity of N-formylmethionyl-tRNA by promoting its recognition by IF2 and preventing the misappropriation of this tRNA by the elongation apparatus. The sequence is that of Methionyl-tRNA formyltransferase from Listeria monocytogenes serotype 4a (strain HCC23).